A 59-amino-acid polypeptide reads, in one-letter code: UPF0391 membrane protein GbCGDNIH1_2123 (59 aa).

Helical transmembrane passes span 6–26 (LALF…TGIS) and 35–55 (ILFV…LAAG).

Belongs to the UPF0391 family.

The protein localises to the cell membrane. The polypeptide is UPF0391 membrane protein GbCGDNIH1_2123 (Granulibacter bethesdensis (strain ATCC BAA-1260 / CGDNIH1)).